The sequence spans 203 residues: Selenocysteine-containing peroxiredoxin PrxU (203 aa).

Residues 2–160 (VSVGKKAPDF…TLRQIQAFQL (159 aa)) form the Thioredoxin domain. Residue Sec-47 is part of the active site. Position 47 (Sec-47) is a non-standard amino acid, selenocysteine.

It belongs to the peroxiredoxin family. AhpC/Prx1 subfamily.

It catalyses the reaction a hydroperoxide + [thioredoxin]-dithiol = an alcohol + [thioredoxin]-disulfide + H2O. In terms of biological role, thiol-specific peroxidase that catalyzes the reduction of hydrogen peroxide and organic hydroperoxides to water and alcohols, respectively. Plays a role in cell protection against oxidative stress by detoxifying peroxides. The chain is Selenocysteine-containing peroxiredoxin PrxU from Peptoclostridium acidaminophilum (Eubacterium acidaminophilum).